Consider the following 49-residue polypeptide: Defensin-like protein 1 (49 aa).

4 disulfides stabilise this stretch: cysteine 3–cysteine 49, cysteine 14–cysteine 35, cysteine 20–cysteine 43, and cysteine 24–cysteine 45.

The protein belongs to the DEFL family.

Its subcellular location is the secreted. In terms of biological role, possesses antimicrobial activity sensitive to inorganic cations. Binds specifically to the fungal plasma membrane. Has no inhibitory effect on insect gut alpha-amylase. The sequence is that of Defensin-like protein 1 from Clitoria ternatea (Butterfly pea).